The following is a 204-amino-acid chain: Urease accessory protein UreG (204 aa).

Glycine 12 to threonine 19 contacts GTP.

Belongs to the SIMIBI class G3E GTPase family. UreG subfamily. In terms of assembly, homodimer. UreD, UreF and UreG form a complex that acts as a GTP-hydrolysis-dependent molecular chaperone, activating the urease apoprotein by helping to assemble the nickel containing metallocenter of UreC. The UreE protein probably delivers the nickel.

It is found in the cytoplasm. Facilitates the functional incorporation of the urease nickel metallocenter. This process requires GTP hydrolysis, probably effectuated by UreG. In Ectopseudomonas mendocina (strain ymp) (Pseudomonas mendocina), this protein is Urease accessory protein UreG.